Reading from the N-terminus, the 310-residue chain is MPAIEKIQSVVNSAYAQFSKASGGANADYIPFLANIPSDLAAVAVVTAQGQVAAAGDAQYRFAIESISKVCTLALALEDFGPQAVQEKIGTSPTGLPFNSVMALELHGDKPLSPLVNAGAMASASLVKAGSTEERWQRILDMQRRLGSKEIAISDELNQSEQTTNFHNRGIAWLLYSAGYMYCDPMEACDVYTRQCSTLLNTVELATVGATIAARGRNPVTGEQVLKPEHCPCIMAEMTMEGMYDSSGDWAYKVGLPGKSGVGGGILTIVPGIMAIAAFSPPLDSVGNSVRGQKMAAFVANELGYNLYKA.

Substrate contacts are provided by Ser66, Asn117, Glu161, Asn168, Tyr192, Tyr244, and Val262.

This sequence belongs to the glutaminase family. In terms of assembly, homotetramer.

It catalyses the reaction L-glutamine + H2O = L-glutamate + NH4(+). The polypeptide is Glutaminase (Desulfovibrio desulfuricans (strain ATCC 27774 / DSM 6949 / MB)).